Consider the following 953-residue polypeptide: Catenin alpha-2 (953 aa).

T632 carries the post-translational modification Phosphothreonine. Phosphoserine is present on residues S640, S651, and S901. A compositionally biased stretch (basic and acidic residues) spans 912–927; sequence EKKPLVKREKPEEFQT. Positions 912-939 are disordered; it reads EKKPLVKREKPEEFQTRVRRGSQKKHIS. Residues 928-938 are compositionally biased toward basic residues; the sequence is RVRRGSQKKHI. S939 carries the post-translational modification Phosphoserine.

The protein belongs to the vinculin/alpha-catenin family. As to quaternary structure, interacts with CDH1 and CDH2. Interacts with ZNF639; recruits CTNNA2 to the nucleus. Interacts with F-actin. In terms of tissue distribution, expressed in neural tissues, with strongest expression in fetal and adult brain. Expressed in the developing cortical plate and marginal zone of 20-week-old human fetal brain.

The protein localises to the cell membrane. Its subcellular location is the cytoplasm. The protein resides in the cytoskeleton. It is found in the cell junction. It localises to the adherens junction. The protein localises to the cell projection. Its subcellular location is the axon. The protein resides in the nucleus. Functionally, may function as a linker between cadherin adhesion receptors and the cytoskeleton to regulate cell-cell adhesion and differentiation in the nervous system. Required for proper regulation of cortical neuronal migration and neurite growth. It acts as a negative regulator of Arp2/3 complex activity and Arp2/3-mediated actin polymerization. It thereby suppresses excessive actin branching which would impair neurite growth and stability. Regulates morphological plasticity of synapses and cerebellar and hippocampal lamination during development. Functions in the control of startle modulation. This chain is Catenin alpha-2 (CTNNA2), found in Homo sapiens (Human).